The sequence spans 365 residues: Histidinol-phosphate aminotransferase (365 aa).

The disordered stretch occupies residues 1–21 (MSRPVPNPGILDIAPYTPGKS). N6-(pyridoxal phosphate)lysine is present on lysine 221.

This sequence belongs to the class-II pyridoxal-phosphate-dependent aminotransferase family. Histidinol-phosphate aminotransferase subfamily. In terms of assembly, homodimer. It depends on pyridoxal 5'-phosphate as a cofactor.

The catalysed reaction is L-histidinol phosphate + 2-oxoglutarate = 3-(imidazol-4-yl)-2-oxopropyl phosphate + L-glutamate. Its pathway is amino-acid biosynthesis; L-histidine biosynthesis; L-histidine from 5-phospho-alpha-D-ribose 1-diphosphate: step 7/9. The chain is Histidinol-phosphate aminotransferase from Rhodopseudomonas palustris (strain ATCC BAA-98 / CGA009).